The sequence spans 387 residues: MKKATVICDMQFGSTGKGLIAGFLAERDQPDVVVTAWSANAGHTYINREGRKWVHCMLANGIVSPKLKAVLIGGGSQMSIPTLISEIMGSLDILQGKSILIHENACIIQQRHVEEEAGPMTKIGSTKKGCGAAMMEKIRRNPESKIVAKDFIDDGLEIPDFKLDGTVGFKDISRHFEELGVCIKVVSNEVYLAVLHKAERVQVEGAQGFSLGLHNGFYPYVTSRECTPAQICSDCNVPISMVDKVVGTMRTYPIRVANRFDDEGKMVGWSGPCYSDQTELTWEQMGVTPEKTTVTKLTRRIFSFSRMQTRQAMLVCMPDEIFLNFANYCASEDELASIIEVISNEGGDVSYIGWGDSAAHIETTLEGDWSDDTNPLFNQYNKSSNIA.

The active-site Proton acceptor is serine 14. ATP is bound by residues serine 14, threonine 15, glycine 16, lysine 17, and glycine 18. Serine 14 serves as a coordination point for dGMP. Serine 14 provides a ligand contact to Mg(2+). Asparagine 40 contacts dGMP. 3 residues coordinate ATP: glycine 42, histidine 43, and threonine 44. Position 42 (glycine 42) interacts with Mg(2+). Residues serine 125, threonine 126, and arginine 140 each contribute to the dGMP site. Glutamine 207 contacts ATP. Position 222 (threonine 222) interacts with dGMP. Threonine 293 provides a ligand contact to Mg(2+). L-aspartate-binding residues include threonine 293, valine 294, and arginine 299. Residues asparagine 324 and asparagine 327 each contribute to the ATP site.

This sequence belongs to the Caudovirales PurZ family. The cofactor is Mg(2+).

It carries out the reaction dGMP + L-aspartate + ATP = (2S)-2-amino-2'-deoxyadenylo-succinate + ADP + phosphate + 2 H(+). It functions in the pathway purine metabolism. Functionally, involved in the synthesis of the atypical nucleotide dZTP (2-amino-2'-deoxyadenosine-5'-triphosphate). Catalyzes the condensation of aspartate with deoxyguanylate into dSMP (N6-succino-2-amino-2'-deoxyadenylate), which undergoes defumarylation and phosphorylation respectively by host PurB and guanylate/nucleoside diphosphate kinases to give dZTP. dZTP is integrated into the viral genome instead of adenine by the viral DNA polymerase. This Z-base probably completely replaces adenosine and forms a triple bond to the opposite T-base. The resulting non-standard viral DNA is called Z-genome. The chemically modified DNA is probably harder for the host bacteria to digest with nucleases or restriction enzymes. This is N6-succino-2-amino-2'-deoxyadenylate synthase from Acinetobacter phage SH-Ab 15497.